A 326-amino-acid polypeptide reads, in one-letter code: Zinc finger protein 830 (326 aa).

A compositionally biased stretch (basic residues) spans 1 to 11 (MAASRKGKAVK). Residues 1 to 37 (MAASRKGKAVKAVKQEDLRRLMQETRRDSGRQKRVES) form a disordered region. A compositionally biased stretch (basic and acidic residues) spans 13–36 (VKQEDLRRLMQETRRDSGRQKRVE). The segment at 50-72 (CALCDAPVKNALLWQTHVLGKQH) adopts a C2H2-type zinc-finger fold. A compositionally biased stretch (low complexity) spans 83-108 (TAPAHTPAPAHTPAHTPAAASSSSST). 3 disordered regions span residues 83–214 (TAPA…PVRD), 237–257 (EMRQVNSASDAIVAEDDEEGR), and 276–309 (EELRAKQETARSRRRSQRREEEPMQEEEPLEEEE). Over residues 180 to 195 (HSGSVSKAEQQESQEP) the composition is skewed to polar residues. Residues 224–295 (KDQLEREWEE…RSRRRSQRRE (72 aa)) are a coiled coil. The span at 276 to 286 (EELRAKQETAR) shows a compositional bias: basic and acidic residues. The segment covering 298–309 (PMQEEEPLEEEE) has biased composition (acidic residues).

The protein resides in the nucleus. The protein localises to the chromosome. Its subcellular location is the nucleus speckle. In terms of biological role, may act as an important regulator of the cell cycle that participates in the maintenance of genome integrity. The polypeptide is Zinc finger protein 830 (Danio rerio (Zebrafish)).